Here is a 505-residue protein sequence, read N- to C-terminus: Maturase K (505 aa).

Belongs to the intron maturase 2 family. MatK subfamily.

The protein resides in the plastid. It is found in the chloroplast. Functionally, usually encoded in the trnK tRNA gene intron. Probably assists in splicing its own and other chloroplast group II introns. This is Maturase K from Illicium oligandrum (Star anise).